A 306-amino-acid polypeptide reads, in one-letter code: Ribose-5-phosphate isomerase (306 aa).

A disordered region spans residues 45–68; it reads GRAQFGVGSTSTSSGDANSVCPAP. Residues 51–61 show a composition bias toward polar residues; sequence VGSTSTSSGDA. At serine 102 the chain carries Phosphoserine.

It belongs to the ribose 5-phosphate isomerase family.

The enzyme catalyses aldehydo-D-ribose 5-phosphate = D-ribulose 5-phosphate. It functions in the pathway carbohydrate degradation; pentose phosphate pathway; D-ribose 5-phosphate from D-ribulose 5-phosphate (non-oxidative stage): step 1/1. This chain is Ribose-5-phosphate isomerase, found in Sus scrofa (Pig).